We begin with the raw amino-acid sequence, 293 residues long: tRNA pseudouridine synthase B (293 aa).

Asp-39 (nucleophile) is an active-site residue.

The protein belongs to the pseudouridine synthase TruB family. Type 1 subfamily.

It catalyses the reaction uridine(55) in tRNA = pseudouridine(55) in tRNA. Responsible for synthesis of pseudouridine from uracil-55 in the psi GC loop of transfer RNAs. This is tRNA pseudouridine synthase B from Streptococcus thermophilus (strain CNRZ 1066).